A 1017-amino-acid chain; its full sequence is MLEALKPAEGATFTYIKGRLIKQQAAVENPILPFPIFFLIKQNKVFLIKSFQSSQKCEFCGDFFANSHTCSVRRRDFYFHHINFKSSEWWSQISFQPIGSCDDTKRFFLTYDVETYTWHGKHGKQLVPFMLVFHLSGELELVSLSANIAEQQRWLAWDTPHTYYYVSPIKGEIGKAFKDLRYEIQKQVTRLLWDNFVGENPELAEIQERHHVNHIDDITAEMHKIKTKGSPQFIEIYVIGHNICGFDEIVLAAQVIHNRTDVLPAFKINRNFMPRNGKILFNDISFCLPNPKYEKRKDFADWECGKLTAADHKYQFVKFMVRDTFALTHTSLRNAAGAYELPVEKGSCPYEAVNEFYRIGSYQQDEDGFPSLRYWKSSEEYQLNKALWREKNVGAYDIIQQTLHYCVQDVLVTSALVNKLQESYKNFIASQVNLPDASFNIFQRPTISSNSHAIFKQILYREVRPNKANLDNVLLAPSHEMYDYVRQSIRGGRCYPTYIGIMEQPIYVYDICGMYASALTHPFPSGQPLNPYERALAATEWIRKLENLEQKIDYFDECLLPGIFTIDADPPDELFLDELPPFCSRKGGRLCWANEPLRGEVATSIDLITLHNRGWAVRILPDERTTIFPEWKCVAKEYVQLNIGAKEKADKEKNQTMRSIAKLLSNALYGSFATKLDNKKIVFSDQLEASASKTIARGNFSIKSSSFIETDNFSAEIMPEFVVTYPPAPSAELDESDENEEHTLFIPKDSHVTYKYKPITFLETEDDDICLHTLENNSPLIENNRYASHIASFVLAWTRVFVSEWAEFLYAEDRGKPLHQRTIKSVYGDTDSLFVTEEGHRLMEQRGKHRIKKNGGKLVFDPKNPSITWLVECETQCEKCKSDAFSSESVFLAPKLYALKNTVCTCCGHVGKGKLRAKGHATTELCYDTLAKCYLSDAQQGSQRFHTSRLSLKRTLATNQSNAAPFTVTETTLTRTVRPWKDKTLVDIDGHRLMPYSKSNPNPRNNDVCWMTLPWNM.

This sequence belongs to the DNA polymerase type-B family. Heterodimer with the terminal protein; this heterodimer binds to bp 9 to 18 of the genome. Forms a complex with viral pTP, DBP and hosts NFIA and POU2F1/OCT1 for initiation of replication.

It localises to the host nucleus. The catalysed reaction is DNA(n) + a 2'-deoxyribonucleoside 5'-triphosphate = DNA(n+1) + diphosphate. Functionally, eukaryotic-type DNA polymerase involved in viral genomic replication. DNA synthesis is protein primed, and acts in a strand displacement replication. Assembles in complex with viral pTP, DBP, host NFIA and host POU2F1/OCT1 on viral origin of replication. The polymerase covalently transfers dCMP onto pTP, thereby initiating complementary strand synthesis. The protein is DNA polymerase of Bovine adenovirus 2 (BAdV-2).